The following is a 112-amino-acid chain: S-adenosylmethionine decarboxylase proenzyme (112 aa).

Residue serine 62 is the Schiff-base intermediate with substrate; via pyruvic acid of the active site. A Pyruvic acid (Ser); by autocatalysis modification is found at serine 62. Residue histidine 67 is the Proton acceptor; for processing activity of the active site. Cysteine 82 (proton donor; for catalytic activity) is an active-site residue.

The protein belongs to the prokaryotic AdoMetDC family. Type 1 subfamily. As to quaternary structure, heterotetramer of two alpha and two beta chains arranged as a dimer of alpha/beta heterodimers. Requires pyruvate as cofactor. Post-translationally, is synthesized initially as an inactive proenzyme. Formation of the active enzyme involves a self-maturation process in which the active site pyruvoyl group is generated from an internal serine residue via an autocatalytic post-translational modification. Two non-identical subunits are generated from the proenzyme in this reaction, and the pyruvate is formed at the N-terminus of the alpha chain, which is derived from the carboxyl end of the proenzyme. The post-translation cleavage follows an unusual pathway, termed non-hydrolytic serinolysis, in which the side chain hydroxyl group of the serine supplies its oxygen atom to form the C-terminus of the beta chain, while the remainder of the serine residue undergoes an oxidative deamination to produce ammonia and the pyruvoyl group blocking the N-terminus of the alpha chain.

The catalysed reaction is S-adenosyl-L-methionine + H(+) = S-adenosyl 3-(methylsulfanyl)propylamine + CO2. Its pathway is amine and polyamine biosynthesis; S-adenosylmethioninamine biosynthesis; S-adenosylmethioninamine from S-adenosyl-L-methionine: step 1/1. Functionally, catalyzes the decarboxylation of S-adenosylmethionine to S-adenosylmethioninamine (dcAdoMet), the propylamine donor required for the synthesis of the polyamines spermine and spermidine from the diamine putrescine. The sequence is that of S-adenosylmethionine decarboxylase proenzyme from Archaeoglobus fulgidus (strain ATCC 49558 / DSM 4304 / JCM 9628 / NBRC 100126 / VC-16).